A 486-amino-acid polypeptide reads, in one-letter code: Bifunctional protein HldE (486 aa).

Residues 1–331 are ribokinase; sequence MSTNVADLLH…NALTAESVPV (331 aa). Position 207–210 (207–210) interacts with ATP; the sequence is NLGE. Aspartate 276 is an active-site residue. A cytidylyltransferase region spans residues 358–486; the sequence is VTNGCFDLLH…STTKLIEKGH (129 aa).

It in the N-terminal section; belongs to the carbohydrate kinase PfkB family. In the C-terminal section; belongs to the cytidylyltransferase family. In terms of assembly, homodimer.

It catalyses the reaction D-glycero-beta-D-manno-heptose 7-phosphate + ATP = D-glycero-beta-D-manno-heptose 1,7-bisphosphate + ADP + H(+). The enzyme catalyses D-glycero-beta-D-manno-heptose 1-phosphate + ATP + H(+) = ADP-D-glycero-beta-D-manno-heptose + diphosphate. Its pathway is nucleotide-sugar biosynthesis; ADP-L-glycero-beta-D-manno-heptose biosynthesis; ADP-L-glycero-beta-D-manno-heptose from D-glycero-beta-D-manno-heptose 7-phosphate: step 1/4. It participates in nucleotide-sugar biosynthesis; ADP-L-glycero-beta-D-manno-heptose biosynthesis; ADP-L-glycero-beta-D-manno-heptose from D-glycero-beta-D-manno-heptose 7-phosphate: step 3/4. In terms of biological role, catalyzes the phosphorylation of D-glycero-D-manno-heptose 7-phosphate at the C-1 position to selectively form D-glycero-beta-D-manno-heptose-1,7-bisphosphate. Its function is as follows. Catalyzes the ADP transfer from ATP to D-glycero-beta-D-manno-heptose 1-phosphate, yielding ADP-D-glycero-beta-D-manno-heptose. In Koribacter versatilis (strain Ellin345), this protein is Bifunctional protein HldE.